The sequence spans 37 residues: Large ribosomal subunit protein bL36 (37 aa).

The protein belongs to the bacterial ribosomal protein bL36 family.

This is Large ribosomal subunit protein bL36 from Helicobacter pylori (strain HPAG1).